Here is a 263-residue protein sequence, read N- to C-terminus: Aminoglycoside 3'-phosphotransferase (263 aa).

D189 (proton acceptor) is an active-site residue.

Belongs to the aminoglycoside phosphotransferase family.

The catalysed reaction is kanamycin A + ATP = kanamycin 3'-phosphate + ADP + H(+). Functionally, resistance to kanamycin and structurally-related aminoglycosides, including amikacin. This Staphylococcus aureus protein is Aminoglycoside 3'-phosphotransferase (aphA).